Here is a 384-residue protein sequence, read N- to C-terminus: Probable endopolygalacturonase C (384 aa).

Positions 1-19 are cleaved as a signal peptide; it reads MVRQLALACGLLAAVAVQA. The propeptide occupies 20 to 40; sequence APAEPAHPMVTEAPDASLLHK. C45 and C63 are disulfide-bonded. 2 PbH1 repeats span residues 176–207 and 208–229; these read ATDL…DIGE and STDI…AINS. D222 acts as the Proton donor in catalysis. C224 and C240 are joined by a disulfide. H244 is a catalytic residue. PbH1 repeat units lie at residues 254–280 and 288–310; these read RDDN…RIKA and ISDI…VIEQ. The N-linked (GlcNAc...) asparagine glycan is linked to N261. Disulfide bonds link C349–C354 and C373–C382.

It belongs to the glycosyl hydrolase 28 family.

It localises to the secreted. The catalysed reaction is (1,4-alpha-D-galacturonosyl)n+m + H2O = (1,4-alpha-D-galacturonosyl)n + (1,4-alpha-D-galacturonosyl)m.. In terms of biological role, involved in maceration and soft-rotting of plant tissue. Hydrolyzes the 1,4-alpha glycosidic bonds of de-esterified pectate in the smooth region of the plant cell wall. This chain is Probable endopolygalacturonase C (pgaC), found in Aspergillus aculeatus.